The chain runs to 415 residues: MIFDKEDFESFDPELWAAIHAEEIRQQQNIELIASENIVSKAVMAAQGSVLTNKYAEGYPGKRYYGGTEAVDVVENLAIDRAKELFGAKFVNVQPHSGSQANAAAYMALIQPGDTVLGMDLNAGGHLTHGASVNFSGKTYHFVPYGVNPQTELLDYEEILKIAKEVQPKLIVAGASAYSRLIDFAKFRQITDSVGAKLMVDMAHIAGLVATDAHPNPLPYADVVTTTTHKTLRGPRGGMILTNDEVLAKKINSAIFPGTQGGPLEHVIAAKAVAFKEALDPEFATYIEQVIKNTQAMADEFAKVEGLRLIAGGSDNHLLNLKVLDLGINGKEAQDLLDSVHITLNKEAIPDETLSPFKTSGVRIGAAAITSRGFKEAEARKVAQLVSNALVNHDNQEKLEEVRKAALELTHQFPL.

(6S)-5,6,7,8-tetrahydrofolate-binding positions include L121 and 125–127 (GHL). K230 is subject to N6-(pyridoxal phosphate)lysine. 355 to 357 (SPF) serves as a coordination point for (6S)-5,6,7,8-tetrahydrofolate.

The protein belongs to the SHMT family. In terms of assembly, homodimer. The cofactor is pyridoxal 5'-phosphate.

It localises to the cytoplasm. The enzyme catalyses (6R)-5,10-methylene-5,6,7,8-tetrahydrofolate + glycine + H2O = (6S)-5,6,7,8-tetrahydrofolate + L-serine. Its pathway is one-carbon metabolism; tetrahydrofolate interconversion. It participates in amino-acid biosynthesis; glycine biosynthesis; glycine from L-serine: step 1/1. Catalyzes the reversible interconversion of serine and glycine with tetrahydrofolate (THF) serving as the one-carbon carrier. This reaction serves as the major source of one-carbon groups required for the biosynthesis of purines, thymidylate, methionine, and other important biomolecules. Also exhibits THF-independent aldolase activity toward beta-hydroxyamino acids, producing glycine and aldehydes, via a retro-aldol mechanism. The polypeptide is Serine hydroxymethyltransferase (Lactococcus lactis subsp. cremoris (strain SK11)).